The primary structure comprises 509 residues: Maturase K (509 aa).

Belongs to the intron maturase 2 family. MatK subfamily.

It localises to the plastid. The protein resides in the chloroplast. In terms of biological role, usually encoded in the trnK tRNA gene intron. Probably assists in splicing its own and other chloroplast group II introns. This chain is Maturase K, found in Ibicella lutea (Yellow unicorn-plant).